A 362-amino-acid chain; its full sequence is Carbamoyl phosphate synthase pyrimidine-specific small chain (362 aa).

The interval 1-168 is CPSase; it reads MKRQLILEDG…TRDPYHVPGP (168 aa). Ser45, Gly219, and Gly221 together coordinate L-glutamine. Residues 171–358 form the Glutamine amidotransferase type-1 domain; sequence RVVLVDYGMK…IKLMESNKHR (188 aa). Cys246 serves as the catalytic Nucleophile. Positions 247, 250, 288, 290, and 291 each coordinate L-glutamine. Residues His331 and Glu333 contribute to the active site.

The protein belongs to the CarA family. In terms of assembly, composed of two chains; the small (or glutamine) chain promotes the hydrolysis of glutamine to ammonia, which is used by the large (or ammonia) chain to synthesize carbamoyl phosphate. Tetramer of heterodimers (alpha,beta)4.

It catalyses the reaction hydrogencarbonate + L-glutamine + 2 ATP + H2O = carbamoyl phosphate + L-glutamate + 2 ADP + phosphate + 2 H(+). The catalysed reaction is L-glutamine + H2O = L-glutamate + NH4(+). The protein operates within pyrimidine metabolism; UMP biosynthesis via de novo pathway; (S)-dihydroorotate from bicarbonate: step 1/3. Functionally, small subunit of the glutamine-dependent carbamoyl phosphate synthetase (CPSase). CPSase catalyzes the formation of carbamoyl phosphate from the ammonia moiety of glutamine, carbonate, and phosphate donated by ATP, constituting the first step of the biosynthetic pathway leading to pyrimidine nucleotides. The small subunit (glutamine amidotransferase) binds and cleaves glutamine to supply the large subunit with the substrate ammonia. This Halalkalibacterium halodurans (strain ATCC BAA-125 / DSM 18197 / FERM 7344 / JCM 9153 / C-125) (Bacillus halodurans) protein is Carbamoyl phosphate synthase pyrimidine-specific small chain.